Reading from the N-terminus, the 311-residue chain is MKIAVLGAAGGIGQALALLLKLQLPAGSELSLYDIAPVTPGVAADVSHIPTAVKIQGFAGEDPIPALENADVVLISAGVARKPGMDRSDLFNINAGIVKNLIEKVAKTCPKACVGIITNPVNTTVAIAAEVLKKAGVYDKRKLFGVTTLDVLRSETFVAELKGLNVSRIAVPVIGGHSGVTILPLLSQVQYTEWKEDEIAPLTKRIQNAGTEVVEAKAGGGSATLSMAQAAARFALSLVQGLSGETVVECTYVEGDGKYARFFAQPVRLGKEGVEEILPVGTLSAFEQKALEDMLPTLRADIELGEKFVNN.

Residues 7–13 (GAAGGIG) and aspartate 34 each bind NAD(+). Substrate-binding residues include arginine 81 and arginine 87. Residues asparagine 94 and 117–119 (ITN) contribute to the NAD(+) site. The substrate site is built by asparagine 119 and arginine 153. Histidine 177 serves as the catalytic Proton acceptor. Residue methionine 227 participates in NAD(+) binding.

It belongs to the LDH/MDH superfamily. MDH type 1 family. In terms of assembly, homodimer.

The catalysed reaction is (S)-malate + NAD(+) = oxaloacetate + NADH + H(+). Its function is as follows. Catalyzes the reversible oxidation of malate to oxaloacetate. In Histophilus somni (strain 2336) (Haemophilus somnus), this protein is Malate dehydrogenase.